Reading from the N-terminus, the 201-residue chain is Transmembrane 4 L6 family member 18 (201 aa).

The Cytoplasmic portion of the chain corresponds to 1 to 9; sequence MGSRKCGSC. Residues 10–30 traverse the membrane as a helical segment; sequence LSSLLIPLALWSIIVNILLYF. Residues 31–49 lie on the Extracellular side of the membrane; sequence PNGQASYASSNKLTNYVWY. The helical transmembrane segment at 50 to 70 threads the bilayer; it reads FEGICFSGIMMLVVAAVLLVL. Topologically, residues 71–93 are cytoplasmic; sequence ENDNNYKCCQSENCSKKYMTVLS. The chain crosses the membrane as a helical span at residues 94–114; it reads MIFSALGIAFSGYCLVISALG. Over 115-157 the chain is Extracellular; sequence LLQGPYCRTLDGWEYAFEGTAGRFLTDSREWIQCLEPAHVVEW. A helical membrane pass occupies residues 158–178; that stretch reads NIILFSILIALSGLQVIVCLI. Residues 179–201 are Cytoplasmic-facing; the sequence is RVVIQLSKSLCGTYSVIIQPGII.

It belongs to the L6 tetraspanin family.

The protein resides in the membrane. This chain is Transmembrane 4 L6 family member 18 (TM4SF18), found in Bos taurus (Bovine).